Reading from the N-terminus, the 476-residue chain is Protein transport protein Sec61 subunit alpha (476 aa).

The Cytoplasmic portion of the chain corresponds to 2–33 (GIKFLEVIKPFCAVLPEIQKPERKIQFREKVL). Residues 34 to 53 (WTAITLFIFLVCCQIPLFGI) form a helical membrane-spanning segment. Residues 54–76 (MSSDSADPFYWMRVILASNRGTL) lie on the Lumenal side of the membrane. Residues 77–96 (MELGISPIVTSGLIMQLLAG) traverse the membrane as a helical segment. The Cytoplasmic segment spans residues 97–117 (AKIIEVGDTPKDRALFNGAQK). A helical membrane pass occupies residues 118-138 (LFGMIITIGQAIVYVMTGMYG). Topologically, residues 139–144 (DPSEMG) are lumenal. A helical membrane pass occupies residues 145–165 (AGICLVIIIQLFVAGLIVLLL). At 166 to 172 (DELLQKG) the chain is on the cytoplasmic side. The chain crosses the membrane as a helical span at residues 173-193 (YGLGSGISLFIATNICETIVW). The Lumenal portion of the chain corresponds to 194–240 (KAFSPTTVNTGRGTEFEGAIIALFHLLATRTDKVRALREAFYRQNLP). Residues 241 to 261 (NLMNLIATVFVFAVVIYFQGF) form a helical membrane-spanning segment. The Cytoplasmic segment spans residues 262-288 (RVDLPIKSARYRGQYNTYPIKLFYTSN). A helical membrane pass occupies residues 289-309 (IPIILQSALVSNLYVISQMLS). The Lumenal segment spans residues 310–354 (TRFSGNFLVNLLGTWSDTSTGGPARAYPVGGLCYYFSPPESFGSV). The chain crosses the membrane as a helical span at residues 355-375 (LDDPVHASIYIVFMLGSCAFF). Topologically, residues 376-420 (SKTWIEVSGSSAKDVAKQLKEQQMVMRGHRETSMVHELNRYIPTA) are cytoplasmic. The chain crosses the membrane as a helical span at residues 421–441 (AAFGGLCIGGLSVMADFLGAI). Residues 442-445 (GSGT) lie on the Lumenal side of the membrane. The helical transmembrane segment at 446 to 462 (GILLAVTIIYQYFEIFV) threads the bilayer. The Cytoplasmic portion of the chain corresponds to 463-476 (KEQSEMGSMGALLF).

Belongs to the SecY/SEC61-alpha family. As to quaternary structure, the SEC61 channel-forming translocon complex consists of channel-forming core components SEC61A1, SEC61B and SEC61G and different auxiliary components such as SEC62 and SEC63. The SEC61 channel associates with the multi-pass translocon (MPT) complex.

It is found in the endoplasmic reticulum membrane. Its function is as follows. Component of SEC61 channel-forming translocon complex that mediates transport of signal peptide-containing precursor polypeptides across the endoplasmic reticulum (ER). Forms a ribosome receptor and a gated pore in the ER membrane, both functions required for cotranslational translocation of nascent polypeptides. May cooperate with auxiliary protein SEC62, SEC63 and HSPA5/BiP to enable post-translational transport of small presecretory proteins. The SEC61 channel is also involved in ER membrane insertion of transmembrane proteins: it mediates membrane insertion of the first few transmembrane segments of proteins, while insertion of subsequent transmembrane regions of multi-pass membrane proteins is mediated by the multi-pass translocon (MPT) complex. The polypeptide is Protein transport protein Sec61 subunit alpha (sec61a) (Gadus ogac (Greenland cod)).